The following is a 209-amino-acid chain: MKIVLATGNKGKLREFRQMCQDEVLPFSDLLGMFEIVEDGDTFAANALIKARTIYNKLKEKHPEEAYVVIADDSGISVPALGGIPGIYSARYAGEGASDKENLYKLIDTLKEKDFKSTPAYYTAAIAIVSDLGEYVVHGWMHGNVIDEARGDKGFGYDPMFIPAGFDKTLGEMDDGVKTAISHRGKALSLAKPIIQMLKNKEKNASDLK.

Residue 7–12 participates in substrate binding; it reads TGNKGK. D73 acts as the Proton acceptor in catalysis. D73 is a Mg(2+) binding site. Substrate is bound by residues S74, 155 to 158, K178, and 183 to 184; these read FGYD and HR.

This sequence belongs to the HAM1 NTPase family. As to quaternary structure, homodimer. The cofactor is Mg(2+).

The enzyme catalyses XTP + H2O = XMP + diphosphate + H(+). It catalyses the reaction dITP + H2O = dIMP + diphosphate + H(+). The catalysed reaction is ITP + H2O = IMP + diphosphate + H(+). Functionally, pyrophosphatase that catalyzes the hydrolysis of nucleoside triphosphates to their monophosphate derivatives, with a high preference for the non-canonical purine nucleotides XTP (xanthosine triphosphate), dITP (deoxyinosine triphosphate) and ITP. Seems to function as a house-cleaning enzyme that removes non-canonical purine nucleotides from the nucleotide pool, thus preventing their incorporation into DNA/RNA and avoiding chromosomal lesions. This is dITP/XTP pyrophosphatase from Sulfurovum sp. (strain NBC37-1).